We begin with the raw amino-acid sequence, 130 residues long: Protein ApaG (130 aa).

In terms of domain architecture, ApaG spans 3-127 (KAETRGISVT…FSLDVPHVRR (125 aa)).

This chain is Protein ApaG, found in Methylobacterium sp. (strain 4-46).